Here is a 1002-residue protein sequence, read N- to C-terminus: MFCKQKHKTRKKPAVNALMADLSDLSDDDLESLLENNVNRSVNQTVTRHRIPVQRDLFMNVLPNQQTFYEETHTDVSYGPTHHQLNEENLDEYIYPTNYEVRQYQYDIVRCALFENVLCAIPTGTGKTFIASTVMLNYYRWTKSSKIIFTAPTRPLVAQQIKACLGITGIPYSDTAILLDKSRKNREEIWQQKRVFFTTPQVVENDLKRGVLNPKDVVLLVIDEAHRARGNYAYVELTKFIDRFNTSYRLLALTATPAADLEGVQEVVNNLHISKIELRTEDSLDVARYMMRRDREMIEIGLIPEIEEVVEQIGIAIAPVLQEAIQLGIYESCEPHQINAFVAMQQSQKIILNPSIPEGLKWKNFFILQLLSQVGHMYRRLRIYGLRAFYNYFQNKYTEFTTKYSMKKSTNKTAANFFYSPILKTVIDKCKRRLEEPEFYSHEKLEYLNNELADFFTMAPSDSRAIIFTELRESALEIVKSIDILNDGALRPHIFIGQAKGKEHFDEETYIRKNKPKGRTKAARLRRIEEENRVEEEKKRQKEQAKLERTGRRTGSSEEAQLSGMNQKQQKKVISDFKKGIYNVLVCTSIGEEGLDIGEVDLIICFDSTSSPIKNIQRMGRTGRKRDGRIVLLFSGNEKFKFEQAMNDYENLQTAITHNALEYTKSDRILPPNVQPKCEEKFIIISNENDEVNKLEDSDEVIKYATQAMLGKLKTKKKEPKPKKTTAKAKKSSDKTFFMPDNVKEGFTSASSLLNKYTINEFGEKISLTPSVSKKAIKPKKEWNMLDEIEYDSVEISPAKSQVEQPSQPHKPTTTQGILTPDETTNHIPSASQGSSVQTDSHTVQEPVLKKLKLAHQIEDPSTSIEYYSGYELVPQYGATDSAQMLTMQEQRHFLKKYVPDTVHWSIAPDLAKSKTRKIRHVPKIEEILNTCQDMHTNTREKIIGMNRTNALARSIGYNRSVGMELEVMLPSIVVPNETITNAKNMTDLLEDEDGLSDFLSD.

A Helicase ATP-binding domain is found at 108–275 (IVRCALFENV…EVVNNLHISK (168 aa)). 121–128 (IPTGTGKT) provides a ligand contact to ATP. Residues 223-226 (DEAH) carry the DEAH box motif. One can recognise a Helicase C-terminal domain in the interval 506–669 (DEETYIRKNK…ALEYTKSDRI (164 aa)). Positions 531 to 551 (ENRVEEEKKRQKEQAKLERTG) are enriched in basic and acidic residues. 2 disordered regions span residues 531–569 (ENRV…NQKQ) and 799–843 (AKSQ…DSHT). Positions 553-568 (RTGSSEEAQLSGMNQK) are enriched in polar residues.

This sequence belongs to the DEAD box helicase family. DEAH subfamily. FANCM sub-subfamily. Interacts with the MHF histone-fold complex to form the FANCM-MHF complex.

The protein resides in the nucleus. It catalyses the reaction ATP + H2O = ADP + phosphate + H(+). In terms of biological role, ATP-dependent DNA helicase involved in DNA damage repair by homologous recombination and in genome maintenance. Capable of unwinding D-loops. Plays a role in limiting crossover recombinants during mitotic DNA double-strand break (DSB) repair. Component of a FANCM-MHF complex which promotes gene conversion at blocked replication forks, probably by reversal of the stalled fork. The protein is ATP-dependent DNA helicase MPH1 of Kluyveromyces lactis (strain ATCC 8585 / CBS 2359 / DSM 70799 / NBRC 1267 / NRRL Y-1140 / WM37) (Yeast).